The chain runs to 117 residues: Immunoglobulin heavy variable 1-69-2 (117 aa).

The first 19 residues, 1-19 (MDCTWRILLLVAAATGTHA), serve as a signal peptide directing secretion. Residues 20–44 (EVQLVQSGAEVKKPGATVKISCKVS) form a framework-1 region. Residues 20 to 117 (EVQLVQSGAE…EDTAVYYCAT (98 aa)) enclose the Ig-like domain. A disulfide bridge links Cys-41 with Cys-115. The segment at 45 to 52 (GYTFTDYY) is complementarity-determining-1. The segment at 53–69 (MHWVQQAPGKGLEWMGL) is framework-2. The interval 70–77 (VDPEDGET) is complementarity-determining-2. The framework-3 stretch occupies residues 78 to 115 (IYAEKFQGRVTITADTSTDTAYMELSSLRSEDTAVYYC). The tract at residues 116–117 (AT) is complementarity-determining-3.

Immunoglobulins are composed of two identical heavy chains and two identical light chains; disulfide-linked.

The protein localises to the secreted. Its subcellular location is the cell membrane. Its function is as follows. V region of the variable domain of immunoglobulin heavy chains that participates in the antigen recognition. Immunoglobulins, also known as antibodies, are membrane-bound or secreted glycoproteins produced by B lymphocytes. In the recognition phase of humoral immunity, the membrane-bound immunoglobulins serve as receptors which, upon binding of a specific antigen, trigger the clonal expansion and differentiation of B lymphocytes into immunoglobulins-secreting plasma cells. Secreted immunoglobulins mediate the effector phase of humoral immunity, which results in the elimination of bound antigens. The antigen binding site is formed by the variable domain of one heavy chain, together with that of its associated light chain. Thus, each immunoglobulin has two antigen binding sites with remarkable affinity for a particular antigen. The variable domains are assembled by a process called V-(D)-J rearrangement and can then be subjected to somatic hypermutations which, after exposure to antigen and selection, allow affinity maturation for a particular antigen. This chain is Immunoglobulin heavy variable 1-69-2, found in Homo sapiens (Human).